The chain runs to 58 residues: Transactivator protein ORF121 (58 aa).

In terms of biological role, stimulates the expression of 39k gene most probably by increasing IE1 expression. The chain is Transactivator protein ORF121 (AC121) from Lepidoptera (butterflies and moths).